A 340-amino-acid chain; its full sequence is Delta(1)-pyrroline-2-carboxylate reductase 2 (340 aa).

Catalysis depends on Ser50, which acts as the Charge relay system. Residue His51 is the Proton donor of the active site. Residue Arg55 coordinates substrate. An NADP(+)-binding site is contributed by 123-127; that stretch reads HFSAL. Thr163 contributes to the substrate binding site. An NADP(+)-binding site is contributed by 181–183; the sequence is DFA. 189–190 contributes to the substrate binding site; the sequence is RG. The active-site Charge relay system is Asp191. Residues 232-233 and 307-313 each bind NADP(+); these read HK and RLPSQRR.

This sequence belongs to the LDH2/MDH2 oxidoreductase family. As to quaternary structure, homodimer.

It carries out the reaction L-proline + NAD(+) = 1-pyrroline-2-carboxylate + NADH + H(+). The enzyme catalyses L-proline + NADP(+) = 1-pyrroline-2-carboxylate + NADPH + H(+). Catalyzes the reduction of Delta(1)-pyrroline-2-carboxylate (Pyr2C) to L-proline, using NADPH as the electron donor. May be involved in a degradation pathway that converts trans-3-hydroxy-L-proline (t3LHyp) to L-proline. In Burkholderia multivorans (strain ATCC 17616 / 249), this protein is Delta(1)-pyrroline-2-carboxylate reductase 2.